A 101-amino-acid chain; its full sequence is Small ribosomal subunit protein bS18c (101 aa).

It belongs to the bacterial ribosomal protein bS18 family. In terms of assembly, part of the 30S ribosomal subunit.

Its subcellular location is the plastid. It is found in the chloroplast. In Citrus sinensis (Sweet orange), this protein is Small ribosomal subunit protein bS18c.